We begin with the raw amino-acid sequence, 388 residues long: Phosphoribosylformylglycinamidine cyclo-ligase, chloroplastic/mitochondrial (388 aa).

This sequence belongs to the AIR synthase family.

It localises to the plastid. Its subcellular location is the chloroplast. The protein localises to the mitochondrion. The enzyme catalyses 2-formamido-N(1)-(5-O-phospho-beta-D-ribosyl)acetamidine + ATP = 5-amino-1-(5-phospho-beta-D-ribosyl)imidazole + ADP + phosphate + H(+). The protein operates within purine metabolism; IMP biosynthesis via de novo pathway; 5-amino-1-(5-phospho-D-ribosyl)imidazole from N(2)-formyl-N(1)-(5-phospho-D-ribosyl)glycinamide: step 2/2. The protein is Phosphoribosylformylglycinamidine cyclo-ligase, chloroplastic/mitochondrial (PUR5) of Vigna unguiculata (Cowpea).